The primary structure comprises 206 residues: Large ribosomal subunit protein uL4 (206 aa).

Residues 48–78 (THSVKTRGHVSGGGAKPWRQKGTGRARAGSN) are disordered.

The protein belongs to the universal ribosomal protein uL4 family. As to quaternary structure, part of the 50S ribosomal subunit.

In terms of biological role, one of the primary rRNA binding proteins, this protein initially binds near the 5'-end of the 23S rRNA. It is important during the early stages of 50S assembly. It makes multiple contacts with different domains of the 23S rRNA in the assembled 50S subunit and ribosome. Functionally, forms part of the polypeptide exit tunnel. The chain is Large ribosomal subunit protein uL4 from Lawsonia intracellularis (strain PHE/MN1-00).